Consider the following 158-residue polypeptide: Transcriptional repressor NrdR (158 aa).

The segment at 3–34 (CPYCGFEESKVVDSRSTEDHKAIRRRRECLKC) is a zinc-finger region. The ATP-cone domain occupies 49-139 (VLVIKRDSNR…VYRQFKDINT (91 aa)).

The protein belongs to the NrdR family. The cofactor is Zn(2+).

Its function is as follows. Negatively regulates transcription of bacterial ribonucleotide reductase nrd genes and operons by binding to NrdR-boxes. This chain is Transcriptional repressor NrdR, found in Clostridium novyi (strain NT).